The primary structure comprises 490 residues: Arginine decarboxylase (490 aa).

K226 carries the post-translational modification N6-(pyridoxal phosphate)lysine.

Belongs to the Orn/Lys/Arg decarboxylase class-I family. Pyridoxal 5'-phosphate serves as cofactor.

Its subcellular location is the cytoplasm. The catalysed reaction is L-arginine + H(+) = agmatine + CO2. The protein operates within amine and polyamine biosynthesis; agmatine biosynthesis; agmatine from L-arginine: step 1/1. Catalyzes the formation of agmatine from arginine. The protein is Arginine decarboxylase (speA) of Bacillus subtilis (strain 168).